A 491-amino-acid polypeptide reads, in one-letter code: Probable glycine dehydrogenase (decarboxylating) subunit 2 (491 aa).

At Lys273 the chain carries N6-(pyridoxal phosphate)lysine.

Belongs to the GcvP family. C-terminal subunit subfamily. In terms of assembly, the glycine cleavage system is composed of four proteins: P, T, L and H. In this organism, the P 'protein' is a heterodimer of two subunits. The cofactor is pyridoxal 5'-phosphate.

It catalyses the reaction N(6)-[(R)-lipoyl]-L-lysyl-[glycine-cleavage complex H protein] + glycine + H(+) = N(6)-[(R)-S(8)-aminomethyldihydrolipoyl]-L-lysyl-[glycine-cleavage complex H protein] + CO2. Functionally, the glycine cleavage system catalyzes the degradation of glycine. The P protein binds the alpha-amino group of glycine through its pyridoxal phosphate cofactor; CO(2) is released and the remaining methylamine moiety is then transferred to the lipoamide cofactor of the H protein. The polypeptide is Probable glycine dehydrogenase (decarboxylating) subunit 2 (Bacillus thuringiensis (strain Al Hakam)).